The chain runs to 4885 residues: Centrosome-associated protein CEP530 (4885 aa).

Positions 1437–1528 (VAEYEAETRG…GREKDQLRSE (92 aa)) form a coiled coil.

It localises to the cytoplasm. The protein resides in the cytoskeleton. The protein localises to the microtubule organizing center. Its subcellular location is the centrosome. Its function is as follows. Required for proper nuclei segregation during the cell division. Plays a role in coordination of karyokinesis and cytokinesis during the tachyzoite cell cycle. This Toxoplasma gondii (strain ATCC 50611 / Me49) protein is Centrosome-associated protein CEP530.